Consider the following 55-residue polypeptide: Accessory gland-specific peptide 70A (55 aa).

Positions 1–19 (MKTLSVFLVLVCLLGLVQS) are cleaved as a signal peptide. A hydroxyproline mark is found at Pro28, Pro32, Pro34, and Pro38. Cys43 and Cys55 form a disulfide bridge.

Main cells of the accessory glands of males (paragonial gland).

The protein resides in the secreted. In terms of biological role, represses female sexual receptivity and stimulates oviposition. This Drosophila sechellia (Fruit fly) protein is Accessory gland-specific peptide 70A (Acp70A).